Here is a 479-residue protein sequence, read N- to C-terminus: Probable xyloglucan galactosyltransferase GT15 (479 aa).

Residues 1–20 lie on the Cytoplasmic side of the membrane; it reads MKNNNSSSVSIENHPWKKKP. The chain crosses the membrane as a helical; Signal-anchor for type II membrane protein span at residues 21 to 40; the sequence is TTLLLFLSLLSISLLLLRLS. The Lumenal segment spans residues 41–479; that stretch reads QDKIILITTT…GIRRNEFKTD (439 aa). 4 N-linked (GlcNAc...) asparagine glycosylation sites follow: N155, N242, N285, and N391.

It belongs to the glycosyltransferase 47 family. As to expression, expressed in roots, hypocotyls, cotyledons, leaves, stems and sepals.

It is found in the golgi apparatus membrane. Functionally, functions in xyloglucan synthesis by adding side chains to the xylosylated glucan backbone. Involved in the galactosylation of hemicellulose xyloglucan. The protein is Probable xyloglucan galactosyltransferase GT15 of Arabidopsis thaliana (Mouse-ear cress).